The following is a 113-amino-acid chain: DNA-binding protein PTO0204 (113 aa).

It belongs to the PDCD5 family.

The protein is DNA-binding protein PTO0204 of Picrophilus torridus (strain ATCC 700027 / DSM 9790 / JCM 10055 / NBRC 100828 / KAW 2/3).